The primary structure comprises 197 residues: Imidazoleglycerol-phosphate dehydratase (197 aa).

This sequence belongs to the imidazoleglycerol-phosphate dehydratase family.

The protein localises to the cytoplasm. It catalyses the reaction D-erythro-1-(imidazol-4-yl)glycerol 3-phosphate = 3-(imidazol-4-yl)-2-oxopropyl phosphate + H2O. Its pathway is amino-acid biosynthesis; L-histidine biosynthesis; L-histidine from 5-phospho-alpha-D-ribose 1-diphosphate: step 6/9. The protein is Imidazoleglycerol-phosphate dehydratase of Erythrobacter litoralis (strain HTCC2594).